A 482-amino-acid chain; its full sequence is uncharacterized protein (482 aa).

2 WD repeats span residues 92-133 (DMPN…REPI) and 191-230 (GHEH…CLCK).

Its subcellular location is the cytoplasm. The protein localises to the nucleus. This is an uncharacterized protein from Schizosaccharomyces pombe (strain 972 / ATCC 24843) (Fission yeast).